The sequence spans 102 residues: Large ribosomal subunit protein uL24 (102 aa).

It belongs to the universal ribosomal protein uL24 family. In terms of assembly, part of the 50S ribosomal subunit.

One of two assembly initiator proteins, it binds directly to the 5'-end of the 23S rRNA, where it nucleates assembly of the 50S subunit. Its function is as follows. One of the proteins that surrounds the polypeptide exit tunnel on the outside of the subunit. In Finegoldia magna (strain ATCC 29328 / DSM 20472 / WAL 2508) (Peptostreptococcus magnus), this protein is Large ribosomal subunit protein uL24.